A 95-amino-acid chain; its full sequence is Sec-independent protein translocase protein TatA (95 aa).

Residues Met1–Gly21 traverse the membrane as a helical segment. The interval Gly42–Val95 is disordered.

It belongs to the TatA/E family. In terms of assembly, the Tat system comprises two distinct complexes: a TatABC complex, containing multiple copies of TatA, TatB and TatC subunits, and a separate TatA complex, containing only TatA subunits. Substrates initially bind to the TatABC complex, which probably triggers association of the separate TatA complex to form the active translocon.

It is found in the cell inner membrane. Its function is as follows. Part of the twin-arginine translocation (Tat) system that transports large folded proteins containing a characteristic twin-arginine motif in their signal peptide across membranes. TatA could form the protein-conducting channel of the Tat system. The sequence is that of Sec-independent protein translocase protein TatA from Methylorubrum extorquens (strain CM4 / NCIMB 13688) (Methylobacterium extorquens).